Reading from the N-terminus, the 193-residue chain is Xanthine phosphoribosyltransferase (193 aa).

Residues L20 and T27 each contribute to the xanthine site. 5-phospho-alpha-D-ribose 1-diphosphate is bound at residue 128-132 (ANGQA). K156 is a binding site for xanthine.

This sequence belongs to the purine/pyrimidine phosphoribosyltransferase family. Xpt subfamily. As to quaternary structure, homodimer.

It localises to the cytoplasm. The enzyme catalyses XMP + diphosphate = xanthine + 5-phospho-alpha-D-ribose 1-diphosphate. It functions in the pathway purine metabolism; XMP biosynthesis via salvage pathway; XMP from xanthine: step 1/1. In terms of biological role, converts the preformed base xanthine, a product of nucleic acid breakdown, to xanthosine 5'-monophosphate (XMP), so it can be reused for RNA or DNA synthesis. The protein is Xanthine phosphoribosyltransferase of Streptococcus pyogenes serotype M49 (strain NZ131).